Reading from the N-terminus, the 301-residue chain is MKIGILSQNETLYSTRRLREACEARGHEAVIINALRCYMNINSVQPSIHFEGNDLTGFDAIIPRIGADITFYGCSVLRQFEMMDVFSVNQSIAISRSRDKLRSLQLLSRKGVGMPITGFASKPDDVPDLIKMVGGAPLVIKLLEGTQGIGVVLAETQTAAESVIEAFMGLKANIMVQEYIKEAGGADIRCFVIGDKVIATMKRQAADGEFRSNLHRGGSASLVRITPEERKTAVAAAKAMGLSVAGVDLLRSERGPLIMEVNSSPGLEGIEAATEKDIAGMIIEYIEKNAAKKNRRHLQYQ.

The 184-residue stretch at 104–287 (LQLLSRKGVG…IAGMIIEYIE (184 aa)) folds into the ATP-grasp domain. ATP contacts are provided by residues Lys-141, 178–179 (EY), Asp-187, and 211–213 (RSN). Asp-248, Glu-260, and Asn-262 together coordinate Mg(2+). Residues Asp-248, Glu-260, and Asn-262 each coordinate Mn(2+).

It belongs to the RimK family. It depends on Mg(2+) as a cofactor. The cofactor is Mn(2+).

The polypeptide is Probable alpha-L-glutamate ligase (Photobacterium profundum (strain SS9)).